A 61-amino-acid chain; its full sequence is Chromatin protein Cren7 (61 aa).

Belongs to the Cren7 family. In terms of assembly, monomer. In terms of processing, methylated at multiple sites, to varying extents.

The protein localises to the chromosome. It localises to the cytoplasm. Functionally, a chromatin protein, binds double-stranded DNA without sequence specificity. Constrains negative DNA supercoils. This Caldivirga maquilingensis (strain ATCC 700844 / DSM 13496 / JCM 10307 / IC-167) protein is Chromatin protein Cren7.